The sequence spans 681 residues: DNA-directed RNA polymerase subunit beta' (681 aa).

The Zn(2+) site is built by Cys-69, Cys-71, Cys-87, and Cys-90. Asp-489, Asp-491, and Asp-493 together coordinate Mg(2+).

This sequence belongs to the RNA polymerase beta' chain family. RpoC1 subfamily. As to quaternary structure, in plastids the minimal PEP RNA polymerase catalytic core is composed of four subunits: alpha, beta, beta', and beta''. When a (nuclear-encoded) sigma factor is associated with the core the holoenzyme is formed, which can initiate transcription. The cofactor is Mg(2+). Requires Zn(2+) as cofactor.

The protein localises to the plastid. The protein resides in the chloroplast. It carries out the reaction RNA(n) + a ribonucleoside 5'-triphosphate = RNA(n+1) + diphosphate. Its function is as follows. DNA-dependent RNA polymerase catalyzes the transcription of DNA into RNA using the four ribonucleoside triphosphates as substrates. In Solanum bulbocastanum (Wild potato), this protein is DNA-directed RNA polymerase subunit beta'.